We begin with the raw amino-acid sequence, 261 residues long: Small ribosomal subunit protein mS23 (261 aa).

Residues 233-261 form a disordered region; sequence RASSPSASWTNETEEEQKPIDQDVEEIQL.

The protein belongs to the mitochondrion-specific ribosomal protein mS23 family. In terms of assembly, component of the mitochondrial small ribosomal subunit.

Its subcellular location is the mitochondrion. The polypeptide is Small ribosomal subunit protein mS23 (RSM25) (Kluyveromyces lactis (strain ATCC 8585 / CBS 2359 / DSM 70799 / NBRC 1267 / NRRL Y-1140 / WM37) (Yeast)).